Reading from the N-terminus, the 135-residue chain is UPF0216 protein MTH_949 (135 aa).

Belongs to the UPF0216 family.

This chain is UPF0216 protein MTH_949, found in Methanothermobacter thermautotrophicus (strain ATCC 29096 / DSM 1053 / JCM 10044 / NBRC 100330 / Delta H) (Methanobacterium thermoautotrophicum).